The primary structure comprises 448 residues: MAISQPVIYTVSRLNNVVRLLLEQEMGLVWLTAEISNLVQHSSGHWYFTLKDQQAQIRAAMFKGQNRRVSFRPQNGQQILVQGQLSLYEARGDYQLIVEKMQPAGDGLLQMKLEALKARLMAEGLFDPRRKRALPTQPKQIGIITSPTGAAIHDMLTILARRDPALPVILYPSAVQGESAVPALLNALETAWRRNECDLLIIGRGGGSLEDLWCFNDELVVRAIANSPIPIVSAVGHETDVTLSDFAADLRAPTPSAAAELVSRDQQQQLHRLAQYQHRLQQAIQLRLQQHQIAWQQQYARLNTQNPRYQLQQKIQKQDELQFRLERVMTQTLVQANQQWMSQHQRLQQVSPKRQLPNLQKQHAYLYQRLLNAMQSKQQDSAQTLSRLSGQLHALSPLQVLARGYSVTTNAKGELIHSSQQVTTGEMLNVQLHQGTLKVRTEEVKSEN.

This sequence belongs to the XseA family. As to quaternary structure, heterooligomer composed of large and small subunits.

It is found in the cytoplasm. The enzyme catalyses Exonucleolytic cleavage in either 5'- to 3'- or 3'- to 5'-direction to yield nucleoside 5'-phosphates.. Its function is as follows. Bidirectionally degrades single-stranded DNA into large acid-insoluble oligonucleotides, which are then degraded further into small acid-soluble oligonucleotides. This is Exodeoxyribonuclease 7 large subunit from Tolumonas auensis (strain DSM 9187 / NBRC 110442 / TA 4).